A 449-amino-acid chain; its full sequence is Immunoglobulin gamma-1 heavy chain (449 aa).

Gln1 carries the post-translational modification Pyrrolidone carboxylic acid. 4 Ig-like domains span residues 1–96, 125–218, 240–339, and 348–444; these read QVQL…VYYC, PSVF…KKVE, PSVF…KTIS, and PQVY…KSLS. A variable (V) domain, involved in antigen recognition region spans residues 1-119; sequence QVQLVQSGGG…GQGTLVTVSS (119 aa). Cystine bridges form between Cys22-Cys96, Cys146-Cys202, Cys263-Cys323, and Cys369-Cys427. N-linked (GlcNAc...) asparagine glycosylation is present at Asn73. Positions 120 to 449 are constant (C) domain; it reads ASTKGPSVFP…QKSLSLSPGK (330 aa). Asn299 carries an N-linked (GlcNAc...) (complex) asparagine glycan.

Immunoglobulins are composed of two identical heavy chains and two identical light chains; disulfide-linked.

It is found in the secreted. Its subcellular location is the cell membrane. Functionally, immunoglobulins, also known as antibodies, are membrane-bound or secreted glycoproteins produced by B lymphocytes. In the recognition phase of humoral immunity, the membrane-bound immunoglobulins serve as receptors which, upon binding of a specific antigen, trigger the clonal expansion and differentiation of B lymphocytes into immunoglobulins-secreting plasma cells. Secreted immunoglobulins mediate the effector phase of humoral immunity, which results in the elimination of bound antigens. The antigen binding site is formed by the variable domain of one heavy chain, together with that of its associated light chain. Thus, each immunoglobulin has two antigen binding sites with remarkable affinity for a particular antigen. The variable domains are assembled by a process called V-(D)-J rearrangement and can then be subjected to somatic hypermutations which, after exposure to antigen and selection, allow affinity maturation for a particular antigen. The chain is Immunoglobulin gamma-1 heavy chain from Homo sapiens (Human).